A 370-amino-acid chain; its full sequence is Protein STRICTOSIDINE SYNTHASE-LIKE 4 (370 aa).

The N-terminal stretch at 1-21 is a signal peptide; sequence MVLFFSTRFLFFSIFFPCLIS. N-linked (GlcNAc...) asparagine glycosylation occurs at asparagine 101. Tyrosine 303 bears the Phosphotyrosine mark.

It belongs to the strictosidine synthase family.

The protein localises to the vacuole. This chain is Protein STRICTOSIDINE SYNTHASE-LIKE 4, found in Arabidopsis thaliana (Mouse-ear cress).